A 370-amino-acid polypeptide reads, in one-letter code: Chorismate synthase (370 aa).

The segment at 41 to 60 (IQGDLDRRKPGTSRHVTQRK) is disordered. Residues R48 and R54 each contribute to the NADP(+) site. Residues 125-127 (RSS), 238-239 (NA), G278, 293-297 (KPTSS), and R319 contribute to the FMN site.

The protein belongs to the chorismate synthase family. Homotetramer. It depends on FMNH2 as a cofactor.

It carries out the reaction 5-O-(1-carboxyvinyl)-3-phosphoshikimate = chorismate + phosphate. The protein operates within metabolic intermediate biosynthesis; chorismate biosynthesis; chorismate from D-erythrose 4-phosphate and phosphoenolpyruvate: step 7/7. Its function is as follows. Catalyzes the anti-1,4-elimination of the C-3 phosphate and the C-6 proR hydrogen from 5-enolpyruvylshikimate-3-phosphate (EPSP) to yield chorismate, which is the branch point compound that serves as the starting substrate for the three terminal pathways of aromatic amino acid biosynthesis. This reaction introduces a second double bond into the aromatic ring system. The polypeptide is Chorismate synthase (Cupriavidus pinatubonensis (strain JMP 134 / LMG 1197) (Cupriavidus necator (strain JMP 134))).